The primary structure comprises 68 residues: Conotoxin TsMMSK-021 (68 aa).

A signal peptide spans 1 to 20; sequence MMSKLGVLLTICLLLFPLTA. Positions 21–52 are excised as a propeptide; sequence VRLDGDQHTDRPADRMQDIATEQHPLFDPVKR. Intrachain disulfides connect C53/C66, C54/C62, and C58/C65. P64 bears the 4-hydroxyproline mark.

This sequence belongs to the conotoxin M superfamily. In terms of tissue distribution, expressed by the venom duct.

Its subcellular location is the secreted. The chain is Conotoxin TsMMSK-021 from Conus tessulatus (Tessellate cone).